We begin with the raw amino-acid sequence, 159 residues long: Ankyrin repeat domain-containing protein 37 (159 aa).

3 ANK repeats span residues 1–25 (MLLL…SVNA), 30–59 (QEQS…DLNQ), and 63–92 (LGET…QIGV). Positions 130–150 (EQQERDPRAPVLRQKRSFRTV) match the Nuclear localization signal motif.

In terms of processing, ubiquitinated by the CRL2(FEM1B) complex, leading to its degradation. In terms of tissue distribution, expressed testis, ovary, uterus, kidney, liver, but not in other tissues.

The protein localises to the nucleus. Its subcellular location is the cytoplasm. The sequence is that of Ankyrin repeat domain-containing protein 37 from Mus musculus (Mouse).